The following is a 401-amino-acid chain: Elongation factor Tu (401 aa).

Residues 10–211 (KPHLNVGTIG…ALDTFVPNPK (202 aa)) form the tr-type G domain. The tract at residues 19 to 26 (GHVDHGKT) is G1. 19-26 (GHVDHGKT) is a GTP binding site. A Mg(2+)-binding site is contributed by T26. The tract at residues 62 to 66 (GITIA) is G2. Residues 83–86 (DCPG) form a G3 region. GTP-binding positions include 83–87 (DCPGH) and 138–141 (NKAD). The interval 138-141 (NKAD) is G4. The G5 stretch occupies residues 179 to 181 (SAV).

The protein belongs to the TRAFAC class translation factor GTPase superfamily. Classic translation factor GTPase family. EF-Tu/EF-1A subfamily. In terms of assembly, monomer.

Its subcellular location is the cytoplasm. The catalysed reaction is GTP + H2O = GDP + phosphate + H(+). In terms of biological role, GTP hydrolase that promotes the GTP-dependent binding of aminoacyl-tRNA to the A-site of ribosomes during protein biosynthesis. The protein is Elongation factor Tu of Leptospira interrogans serogroup Icterohaemorrhagiae serovar copenhageni (strain Fiocruz L1-130).